Reading from the N-terminus, the 267-residue chain is Phosphate import ATP-binding protein PstB 2 (267 aa).

Residues 21–262 (LSTKDVHVYY…AKLQSTNDYV (242 aa)) form the ABC transporter domain. An ATP-binding site is contributed by 53 to 60 (GPSGSGKS).

This sequence belongs to the ABC transporter superfamily. Phosphate importer (TC 3.A.1.7) family. The complex is composed of two ATP-binding proteins (PstB), two transmembrane proteins (PstC and PstA) and a solute-binding protein (PstS).

It is found in the cell membrane. It catalyses the reaction phosphate(out) + ATP + H2O = ADP + 2 phosphate(in) + H(+). In terms of biological role, part of the ABC transporter complex PstSACB involved in phosphate import. Responsible for energy coupling to the transport system. The polypeptide is Phosphate import ATP-binding protein PstB 2 (Streptococcus pneumoniae serotype 4 (strain ATCC BAA-334 / TIGR4)).